A 400-amino-acid chain; its full sequence is F-box/kelch-repeat protein At4g19870 (400 aa).

The span at M1 to K10 shows a compositional bias: basic and acidic residues. A disordered region spans residues M1 to L33. Positions S19–L33 are enriched in low complexity. The F-box domain maps to S27–R73. 3 Kelch repeats span residues E146–G192, I194–E240, and E242–Y284.

The polypeptide is F-box/kelch-repeat protein At4g19870 (Arabidopsis thaliana (Mouse-ear cress)).